A 557-amino-acid chain; its full sequence is Membrane protein insertase YidC (557 aa).

A run of 5 helical transmembrane segments spans residues 3–23 (IKRT…FDNW), 363–383 (FVGN…AVFF), 437–457 (LPVV…LASV), 476–496 (PYFI…KLNP), and 507–527 (MMFM…GLVL).

The protein belongs to the OXA1/ALB3/YidC family. Type 1 subfamily. Interacts with the Sec translocase complex via SecD. Specifically interacts with transmembrane segments of nascent integral membrane proteins during membrane integration.

The protein localises to the cell inner membrane. Required for the insertion and/or proper folding and/or complex formation of integral membrane proteins into the membrane. Involved in integration of membrane proteins that insert both dependently and independently of the Sec translocase complex, as well as at least some lipoproteins. Aids folding of multispanning membrane proteins. The sequence is that of Membrane protein insertase YidC from Burkholderia thailandensis (strain ATCC 700388 / DSM 13276 / CCUG 48851 / CIP 106301 / E264).